Here is a 183-residue protein sequence, read N- to C-terminus: Ribosome rescue factor SmrB (183 aa).

One can recognise a Smr domain in the interval 98–173 (LDLHGLTQQQ…GDAALLVLIE (76 aa)).

It belongs to the SmrB family. As to quaternary structure, associates with collided ribosomes, but not with correctly translating polysomes.

Functionally, acts as a ribosome collision sensor. Detects stalled/collided disomes (pairs of ribosomes where the leading ribosome is stalled and a second ribosome has collided with it) and endonucleolytically cleaves mRNA at the 5' boundary of the stalled ribosome. Stalled/collided disomes form a new interface (primarily via the 30S subunits) that binds SmrB. Cleaved mRNA becomes available for tmRNA ligation, leading to ribosomal subunit dissociation and rescue of stalled ribosomes. This chain is Ribosome rescue factor SmrB, found in Klebsiella pneumoniae (strain 342).